A 296-amino-acid polypeptide reads, in one-letter code: Probable endonuclease 4 (296 aa).

Residues His68, His108, Glu145, Asp179, His182, His216, Asp229, His231, and Glu261 each coordinate Zn(2+).

It belongs to the AP endonuclease 2 family. Zn(2+) is required as a cofactor.

It catalyses the reaction Endonucleolytic cleavage to 5'-phosphooligonucleotide end-products.. Its function is as follows. Endonuclease IV plays a role in DNA repair. It cleaves phosphodiester bonds at apurinic or apyrimidinic (AP) sites, generating a 3'-hydroxyl group and a 5'-terminal sugar phosphate. This is Probable endonuclease 4 from Geobacter sulfurreducens (strain ATCC 51573 / DSM 12127 / PCA).